Reading from the N-terminus, the 275-residue chain is uncharacterized protein (275 aa).

NAD(+) contacts are provided by residues 20–22 (RAQ), 41–42 (DI), 80–81 (DI), and Asn107. Substrate is bound at residue Ser160. The Proton acceptor role is filled by Tyr173. NAD(+) is bound by residues Lys177 and 206-208 (VDT).

It belongs to the short-chain dehydrogenases/reductases (SDR) family.

This is an uncharacterized protein from Mycobacterium tuberculosis (strain CDC 1551 / Oshkosh).